Reading from the N-terminus, the 243-residue chain is Ribosomal RNA small subunit methyltransferase G (243 aa).

S-adenosyl-L-methionine contacts are provided by residues G97, L102, V148 to E149, and R161.

This sequence belongs to the methyltransferase superfamily. RNA methyltransferase RsmG family.

The protein resides in the cytoplasm. It carries out the reaction guanosine(527) in 16S rRNA + S-adenosyl-L-methionine = N(7)-methylguanosine(527) in 16S rRNA + S-adenosyl-L-homocysteine. Functionally, specifically methylates the N7 position of guanine in position 527 of 16S rRNA. This Paracidovorax citrulli (strain AAC00-1) (Acidovorax citrulli) protein is Ribosomal RNA small subunit methyltransferase G.